The following is a 426-amino-acid chain: Glutamyl-tRNA reductase (426 aa).

Residues 49-52 (TCNR), S109, 114-116 (EGQ), and Q120 each bind substrate. Catalysis depends on C50, which acts as the Nucleophile. 189–194 (GAGETG) is an NADP(+) binding site.

The protein belongs to the glutamyl-tRNA reductase family. In terms of assembly, homodimer.

The catalysed reaction is (S)-4-amino-5-oxopentanoate + tRNA(Glu) + NADP(+) = L-glutamyl-tRNA(Glu) + NADPH + H(+). It participates in porphyrin-containing compound metabolism; protoporphyrin-IX biosynthesis; 5-aminolevulinate from L-glutamyl-tRNA(Glu): step 1/2. It functions in the pathway porphyrin-containing compound metabolism; chlorophyll biosynthesis. Its function is as follows. Catalyzes the NADPH-dependent reduction of glutamyl-tRNA(Glu) to glutamate 1-semialdehyde (GSA). This chain is Glutamyl-tRNA reductase, found in Prosthecochloris aestuarii (strain DSM 271 / SK 413).